The primary structure comprises 486 residues: Malonate-semialdehyde dehydrogenase (486 aa).

The NAD(+) site is built by Phe154, Lys178, Glu181, Arg182, and Ser231. The active-site Nucleophile is Cys286. Residue Glu386 coordinates NAD(+).

This sequence belongs to the aldehyde dehydrogenase family. IolA subfamily. Homotetramer.

It catalyses the reaction 3-oxopropanoate + NAD(+) + CoA + H2O = hydrogencarbonate + acetyl-CoA + NADH + H(+). The catalysed reaction is 2-methyl-3-oxopropanoate + NAD(+) + CoA + H2O = propanoyl-CoA + hydrogencarbonate + NADH + H(+). Its pathway is polyol metabolism; myo-inositol degradation into acetyl-CoA; acetyl-CoA from myo-inositol: step 7/7. Functionally, catalyzes the oxidation of malonate semialdehyde (MSA) and methylmalonate semialdehyde (MMSA) into acetyl-CoA and propanoyl-CoA, respectively. Is involved in a myo-inositol catabolic pathway. Bicarbonate, and not CO2, is the end-product of the enzymatic reaction. This is Malonate-semialdehyde dehydrogenase from Bacillus cereus (strain ATCC 14579 / DSM 31 / CCUG 7414 / JCM 2152 / NBRC 15305 / NCIMB 9373 / NCTC 2599 / NRRL B-3711).